Consider the following 97-residue polypeptide: Aspartyl/glutamyl-tRNA(Asn/Gln) amidotransferase subunit C (97 aa).

This sequence belongs to the GatC family. Heterotrimer of A, B and C subunits.

The enzyme catalyses L-glutamyl-tRNA(Gln) + L-glutamine + ATP + H2O = L-glutaminyl-tRNA(Gln) + L-glutamate + ADP + phosphate + H(+). It carries out the reaction L-aspartyl-tRNA(Asn) + L-glutamine + ATP + H2O = L-asparaginyl-tRNA(Asn) + L-glutamate + ADP + phosphate + 2 H(+). Its function is as follows. Allows the formation of correctly charged Asn-tRNA(Asn) or Gln-tRNA(Gln) through the transamidation of misacylated Asp-tRNA(Asn) or Glu-tRNA(Gln) in organisms which lack either or both of asparaginyl-tRNA or glutaminyl-tRNA synthetases. The reaction takes place in the presence of glutamine and ATP through an activated phospho-Asp-tRNA(Asn) or phospho-Glu-tRNA(Gln). The sequence is that of Aspartyl/glutamyl-tRNA(Asn/Gln) amidotransferase subunit C from Prochlorococcus marinus (strain MIT 9515).